The following is a 427-amino-acid chain: DNA topoisomerase 6 subunit A (427 aa).

A Topo IIA-type catalytic domain is found at 76-209 (LSLSSVQTEI…LNVIAAEKGV (134 aa)). The active-site O-(5'-phospho-DNA)-tyrosine intermediate is Y170. 2 residues coordinate Mg(2+): E256 and D308.

This sequence belongs to the TOP6A family. As to quaternary structure, homodimer. Heterotetramer of two TOP6A and two TOP6B subunits. Interacts with BIN4 and RHL1. Mg(2+) is required as a cofactor. As to expression, highly expressed in leaves, stems, flowers and seedlings.

Its subcellular location is the nucleus. It carries out the reaction ATP-dependent breakage, passage and rejoining of double-stranded DNA.. Its function is as follows. Component of the DNA topoisomerase VI involved in chromatin organization and progression of endoreduplication cycles. Relaxes both positive and negative superturns and exhibits a strong decatenase activity. Involved in cell-elongation processes. The chain is DNA topoisomerase 6 subunit A from Arabidopsis thaliana (Mouse-ear cress).